We begin with the raw amino-acid sequence, 32 residues long: Glutathione S-transferase 8.2 (32 aa).

Gln-21–Ser-22 is a binding site for glutathione.

This sequence belongs to the GST superfamily. Alpha family. As to quaternary structure, homodimer. Post-translationally, the N-terminus is blocked.

It is found in the cytoplasm. It catalyses the reaction RX + glutathione = an S-substituted glutathione + a halide anion + H(+). In terms of biological role, conjugation of reduced glutathione to a wide number of exogenous and endogenous hydrophobic electrophiles. In Dicentrarchus labrax (European seabass), this protein is Glutathione S-transferase 8.2.